The following is a 39-amino-acid chain: Natriuretic peptide NsNP-b (39 aa).

A propeptide spanning residues 1-8 (SGSKTAKI) is cleaved from the precursor. Cysteines 12 and 28 form a disulfide. The interval 19–39 (RIGSTSGMGCGSVPKPTPGGS) is disordered.

Belongs to the natriuretic peptide family. As to expression, expressed by the venom gland.

It localises to the secreted. Snake venom natriuretic peptide that targets both NPR1 and NPR2. Exhibits hypotensive and vasodepressor activities. The sequence is that of Natriuretic peptide NsNP-b from Notechis scutatus scutatus (Mainland tiger snake).